Reading from the N-terminus, the 581-residue chain is Protein SPT2 homolog (581 aa).

Over residues 26–35 the composition is skewed to low complexity; that stretch reads YYSTKYSPPK. Disordered regions lie at residues 26–50 and 145–495; these read YYST…NIQK and QEDK…EYDS. Residues 36 to 76 adopt a coiled-coil conformation; that stretch reads KQSKESKQLSSNIQKFLQKKEAEEAEKKRLERQKLNDLLAK. A compositionally biased stretch (basic and acidic residues) spans 162-181; that stretch reads SGTKERVKAAITREREEAKG. Polar residues-rich tracts occupy residues 182–197 and 204–213; these read NTRQ…SSAT and VARSYSTSKT. Composition is skewed to basic and acidic residues over residues 218–236 and 256–312; these read NAEK…EQRR and LAEK…KETP. Positions 276–307 form a coiled coil; sequence ERLLSAREKRELEERQRQQEQRAQRLKMRESE. The segment covering 352-376 has biased composition (low complexity); that stretch reads SSASSTSLSSSNSHSSASRSSVSSS. Positions 447 to 461 are enriched in polar residues; that stretch reads TRQTPSSDVQRSQGG. A compositionally biased stretch (acidic residues) spans 486–495; the sequence is DDDDEDEYDS.

Belongs to the SPT2 family.

The protein is Protein SPT2 homolog of Drosophila melanogaster (Fruit fly).